The following is a 149-amino-acid chain: Deoxyuridine 5'-triphosphate nucleotidohydrolase (149 aa).

Substrate is bound by residues 68 to 70, Asn81, and 85 to 87; these read RSG and LID.

The protein belongs to the dUTPase family. Mg(2+) serves as cofactor.

The catalysed reaction is dUTP + H2O = dUMP + diphosphate + H(+). Its pathway is pyrimidine metabolism; dUMP biosynthesis; dUMP from dCTP (dUTP route): step 2/2. In terms of biological role, this enzyme is involved in nucleotide metabolism: it produces dUMP, the immediate precursor of thymidine nucleotides and it decreases the intracellular concentration of dUTP so that uracil cannot be incorporated into DNA. The sequence is that of Deoxyuridine 5'-triphosphate nucleotidohydrolase from Azoarcus sp. (strain BH72).